A 160-amino-acid chain; its full sequence is Xanthine-guanine phosphoribosyltransferase (160 aa).

Residues 41-42 (RG) and 93-101 (DDLVDTGRT) each bind 5-phospho-alpha-D-ribose 1-diphosphate. Residue Asp94 coordinates Mg(2+). Residues Asp97 and Ile140 each contribute to the guanine site. Residues Asp97 and Ile140 each coordinate xanthine. Residues 97-101 (DTGRT) and 139-140 (WI) contribute to the GMP site.

Belongs to the purine/pyrimidine phosphoribosyltransferase family. XGPT subfamily. In terms of assembly, homotetramer. Requires Mg(2+) as cofactor.

It localises to the cell inner membrane. The catalysed reaction is GMP + diphosphate = guanine + 5-phospho-alpha-D-ribose 1-diphosphate. The enzyme catalyses XMP + diphosphate = xanthine + 5-phospho-alpha-D-ribose 1-diphosphate. It carries out the reaction IMP + diphosphate = hypoxanthine + 5-phospho-alpha-D-ribose 1-diphosphate. It participates in purine metabolism; GMP biosynthesis via salvage pathway; GMP from guanine: step 1/1. Its pathway is purine metabolism; XMP biosynthesis via salvage pathway; XMP from xanthine: step 1/1. In terms of biological role, purine salvage pathway enzyme that catalyzes the transfer of the ribosyl-5-phosphate group from 5-phospho-alpha-D-ribose 1-diphosphate (PRPP) to the N9 position of the 6-oxopurines guanine and xanthine to form the corresponding ribonucleotides GMP (guanosine 5'-monophosphate) and XMP (xanthosine 5'-monophosphate), with the release of PPi. To a lesser extent, also acts on hypoxanthine. This is Xanthine-guanine phosphoribosyltransferase from Desulfotalea psychrophila (strain LSv54 / DSM 12343).